The primary structure comprises 1025 residues: Leucyl-cystinyl aminopeptidase (1025 aa).

M1 carries the post-translational modification N-acetylmethionine. At 1–109 (METFTNDRLQ…DGTCSVPSAR (109 aa)) the chain is on the cytoplasmic side. Residues 53 to 54 (LL) carry the Dileucine internalization motif motif. Phosphotyrosine is present on Y70. Positions 76–77 (LL) match the Dileucine internalization motif motif. S80 and S91 each carry phosphoserine; by PKC/PRKCZ; in vitro. The interval 96–101 (RQSPDG) is tankyrase binding. The helical; Signal-anchor for type II membrane protein transmembrane segment at 110–131 (TLVICVFVIVVAVSVIMVIYLL) threads the bilayer. Topologically, residues 132–1025 (PRCTFTKEGC…RNLKTLTLWL (894 aa)) are extracellular. Residues N145, N184, N215, N256, and N266 are each glycosylated (N-linked (GlcNAc...) asparagine). Residue E295 coordinates substrate. N-linked (GlcNAc...) asparagine glycosylation is found at N368 and N374. 428 to 432 (GAMEN) is a binding site for substrate. N-linked (GlcNAc...) asparagine glycosylation occurs at N447. H464 is a Zn(2+) binding site. Residue E465 is the Proton acceptor of the active site. H468 and E487 together coordinate Zn(2+). 9 N-linked (GlcNAc...) asparagine glycosylation sites follow: N525, N578, N664, N682, N695, N758, N834, N850, and N989.

Belongs to the peptidase M1 family. As to quaternary structure, homodimer. Binds tankyrases 1 and 2. The cofactor is Zn(2+). Post-translationally, N-glycosylated. Highly expressed in heart, brain, spleen, lung, kidney and white adipose tissue. Detected at lower levels in skeletal muscle and liver.

It localises to the cell membrane. The protein localises to the endomembrane system. The enzyme catalyses Release of an N-terminal amino acid, Cys-|-Xaa-, in which the half-cystine residue is involved in a disulfide loop, notably in oxytocin or vasopressin. Hydrolysis rates on a range of aminoacyl arylamides exceed that for the cystinyl derivative, however.. Release of an N-terminal amino acid, cleave before cysteine, leucine as well as other amino acids. Degrades peptide hormones such as oxytocin, vasopressin and angiotensin III, and plays a role in maintaining homeostasis during pregnancy. May be involved in the inactivation of neuronal peptides in the brain. Cleaves Met-enkephalin and dynorphin. Binds angiotensin IV and may be the angiotensin IV receptor in the brain. This Rattus norvegicus (Rat) protein is Leucyl-cystinyl aminopeptidase (Lnpep).